We begin with the raw amino-acid sequence, 385 residues long: Prepilin peptidase EppA (385 aa).

The next 10 membrane-spanning stretches (helical) occupy residues 1–21, 29–49, 58–78, 80–100, 104–124, 126–146, 166–186, 187–207, 231–251, and 358–378; these read MILMVIELLSVFIALLACFYA, GIIPNRLTFPVIGLGLLLNGA, WIFIYTAIFTAGIFALGYILW, MVAWAGGDVKLFTAVTSLLPF, LVSYSFLGTAFPVTASYPFPL, VIINSILALLPFLLVYVFFII, TSMVLALVITSAVTLTFLITD, FLPFQIIVLSLILVYLLTMVI, FELTVSGVVILWVSITVIQLI, and PAIFIGLLVSLLIGDLAMILF.

This sequence belongs to the peptidase A24 family.

The protein resides in the cell membrane. Functionally, peptidase that processes the N-terminus of prepilins. The polypeptide is Prepilin peptidase EppA (Methanothermobacter thermautotrophicus (strain ATCC 29096 / DSM 1053 / JCM 10044 / NBRC 100330 / Delta H) (Methanobacterium thermoautotrophicum)).